The following is a 206-amino-acid chain: Type III pantothenate kinase (206 aa).

5-12 (DIGNTFLH) provides a ligand contact to ATP. Substrate-binding positions include Tyr69 and 73–76 (GVDR). The Proton acceptor role is filled by Asp75. Asp90 provides a ligand contact to K(+). Ser93 contributes to the ATP binding site. Substrate is bound at residue Thr145.

This sequence belongs to the type III pantothenate kinase family. In terms of assembly, homodimer. The cofactor is NH4(+). K(+) is required as a cofactor.

Its subcellular location is the cytoplasm. The enzyme catalyses (R)-pantothenate + ATP = (R)-4'-phosphopantothenate + ADP + H(+). It functions in the pathway cofactor biosynthesis; coenzyme A biosynthesis; CoA from (R)-pantothenate: step 1/5. Its function is as follows. Catalyzes the phosphorylation of pantothenate (Pan), the first step in CoA biosynthesis. The protein is Type III pantothenate kinase of Helicobacter hepaticus (strain ATCC 51449 / 3B1).